A 167-amino-acid chain; its full sequence is Signal peptidase complex catalytic subunit SEC11 (167 aa).

The Cytoplasmic segment spans residues 1–12; that stretch reads MNIRHQLVQFLN. Residues 13-30 traverse the membrane as a helical; Signal-anchor for type II membrane protein segment; sequence LALVLSSAFMAWKTLSVI. Residues 31–167 lie on the Lumenal side of the membrane; it reads TNSHSPIVVV…MGISSLLSNE (137 aa). Active-site charge relay system residues include S44, H83, and D109. A C-terminal short (CTS) helix region spans residues 153–164; it reads TLLGLMGISSLL.

Belongs to the peptidase S26B family. Component of the signal peptidase complex (SPC) composed of a catalytic subunit SEC11 and three accessory subunits SPC1, SPC2 and SPC3. The complex induces a local thinning of the ER membrane which is used to measure the length of the signal peptide (SP) h-region of protein substrates. This ensures the selectivity of the complex towards h-regions shorter than 18-20 amino acids. SPC associates with the translocon complex.

Its subcellular location is the endoplasmic reticulum membrane. It catalyses the reaction Cleavage of hydrophobic, N-terminal signal or leader sequences from secreted and periplasmic proteins.. Its function is as follows. Catalytic component of the signal peptidase complex (SPC) which catalyzes the cleavage of N-terminal signal sequences from nascent proteins as they are translocated into the lumen of the endoplasmic reticulum. Specifically cleaves N-terminal signal peptides that contain a hydrophobic alpha-helix (h-region) shorter than 18-20 amino acids. This Debaryomyces hansenii (strain ATCC 36239 / CBS 767 / BCRC 21394 / JCM 1990 / NBRC 0083 / IGC 2968) (Yeast) protein is Signal peptidase complex catalytic subunit SEC11 (SEC11).